A 508-amino-acid chain; its full sequence is General transcription factor IIF subunit 1 (508 aa).

Alanine 2 carries the post-translational modification N-acetylalanine. The residue at position 156 (threonine 156) is a Phosphothreonine. The segment at methionine 177–threonine 446 is disordered. Phosphoserine is present on residues serine 217, serine 218, serine 221, and serine 224. Residues serine 232 to lysine 251 are compositionally biased toward basic residues. 2 stretches are compositionally biased toward acidic residues: residues aspartate 255–glutamate 270 and glutamate 303–glutamate 325. Threonine 331 carries the post-translational modification Phosphothreonine. The span at aspartate 343 to serine 355 shows a compositional bias: acidic residues. Residues alanine 364–arginine 374 are compositionally biased toward basic residues. 4 positions are modified to phosphoserine: serine 377, serine 380, serine 381, and serine 385. Over residues glycine 378–glycine 388 the composition is skewed to polar residues. The residue at position 389 (threonine 389) is a Phosphothreonine. A compositionally biased stretch (low complexity) spans threonine 389–serine 406. Position 391 is a phosphoserine (serine 391). N6-acetyllysine is present on lysine 407. Residues glycine 428–valine 443 are compositionally biased toward polar residues. Phosphoserine is present on residues serine 431, serine 433, and serine 436. Position 437 is a phosphothreonine (threonine 437). Serine 440 bears the Phosphoserine mark.

The protein belongs to the TFIIF alpha subunit family. In terms of assembly, heterodimer of an alpha and a beta subunit. Interacts with GTF2F2, CTDP1, TAF6/TAFII80 and URI1. Interacts with GTF2B (via C-terminus and preferentially via acetylated form); this interaction prevents binding of GTF2B to GTF2F2. Part of TBP-based Pol II pre-initiation complex (PIC), in which Pol II core assembles with general transcription factors and other specific initiation factors including GTF2E1, GTF2E2, GTF2F1, GTF2F2, TCEA1, ERCC2, ERCC3, GTF2H2, GTF2H3, GTF2H4, GTF2H5, GTF2A1, GTF2A2, GTF2B and TBP; this large multi-subunit PIC complex mediates DNA unwinding and targets Pol II core to the transcription start site where the first phosphodiester bond forms. Phosphorylated on Ser and other residues by TAF1 and casein kinase II-like kinases.

Its subcellular location is the nucleus. In terms of biological role, TFIIF is a general transcription initiation factor that binds to RNA polymerase II and helps to recruit it to the initiation complex in collaboration with TFIIB. It promotes transcription elongation. This chain is General transcription factor IIF subunit 1 (Gtf2f1), found in Mus musculus (Mouse).